A 325-amino-acid chain; its full sequence is DNA repair and recombination protein RadA (325 aa).

Residue G107–T114 coordinates ATP.

This sequence belongs to the eukaryotic RecA-like protein family.

In terms of biological role, involved in DNA repair and in homologous recombination. Binds and assemble on single-stranded DNA to form a nucleoprotein filament. Hydrolyzes ATP in a ssDNA-dependent manner and promotes DNA strand exchange between homologous DNA molecules. This chain is DNA repair and recombination protein RadA, found in Methanosarcina acetivorans (strain ATCC 35395 / DSM 2834 / JCM 12185 / C2A).